The chain runs to 709 residues: Elongation factor G (709 aa).

Residues 8–290 (NRYRNIGISA…AVIQYMPAPQ (283 aa)) form the tr-type G domain. Residues 17-24 (AHIDAGKT), 88-92 (DTPGH), and 142-145 (NKMD) each bind GTP.

This sequence belongs to the TRAFAC class translation factor GTPase superfamily. Classic translation factor GTPase family. EF-G/EF-2 subfamily.

It localises to the cytoplasm. Functionally, catalyzes the GTP-dependent ribosomal translocation step during translation elongation. During this step, the ribosome changes from the pre-translocational (PRE) to the post-translocational (POST) state as the newly formed A-site-bound peptidyl-tRNA and P-site-bound deacylated tRNA move to the P and E sites, respectively. Catalyzes the coordinated movement of the two tRNA molecules, the mRNA and conformational changes in the ribosome. In Psychrobacter sp. (strain PRwf-1), this protein is Elongation factor G.